The following is a 270-amino-acid chain: SURF1-like protein (270 aa).

2 helical membrane-spanning segments follow: residues 7 to 29 and 246 to 265; these read GFKL…VYRY and YIGT…FRYM.

Belongs to the SURF1 family.

It localises to the mitochondrion inner membrane. Functionally, probably involved in the biogenesis of the COX complex. This chain is SURF1-like protein (surf1-1), found in Dictyostelium discoideum (Social amoeba).